Consider the following 91-residue polypeptide: Elongation factor 1-beta (91 aa).

The protein belongs to the EF-1-beta/EF-1-delta family.

In terms of biological role, promotes the exchange of GDP for GTP in EF-1-alpha/GDP, thus allowing the regeneration of EF-1-alpha/GTP that could then be used to form the ternary complex EF-1-alpha/GTP/AAtRNA. This is Elongation factor 1-beta from Thermofilum pendens (strain DSM 2475 / Hrk 5).